The sequence spans 132 residues: Ribosome-binding factor A (132 aa).

It belongs to the RbfA family. As to quaternary structure, monomer. Binds 30S ribosomal subunits, but not 50S ribosomal subunits or 70S ribosomes.

Its subcellular location is the cytoplasm. In terms of biological role, one of several proteins that assist in the late maturation steps of the functional core of the 30S ribosomal subunit. Associates with free 30S ribosomal subunits (but not with 30S subunits that are part of 70S ribosomes or polysomes). Required for efficient processing of 16S rRNA. May interact with the 5'-terminal helix region of 16S rRNA. This chain is Ribosome-binding factor A, found in Pectobacterium carotovorum subsp. carotovorum (strain PC1).